Consider the following 90-residue polypeptide: MAVKIRLTRMGSKKKPFYRINVADSRSPRDGRFIETVGTYNPLVAENQVTLKEDRVLAWLANGAQPSDTVRNILSKEGVLKKFHDSKFSK.

It belongs to the bacterial ribosomal protein bS16 family.

This chain is Small ribosomal subunit protein bS16, found in Streptococcus pneumoniae (strain Hungary19A-6).